Here is a 163-residue protein sequence, read N- to C-terminus: Nucleotide-binding protein BBR47_25280 (163 aa).

This sequence belongs to the YajQ family.

Its function is as follows. Nucleotide-binding protein. This is Nucleotide-binding protein BBR47_25280 from Brevibacillus brevis (strain 47 / JCM 6285 / NBRC 100599).